The primary structure comprises 578 residues: Sulfite reductase [NADPH] hemoprotein beta-component (578 aa).

4 residues coordinate [4Fe-4S] cluster: Cys441, Cys447, Cys487, and Cys491. Cys491 contacts siroheme.

Belongs to the nitrite and sulfite reductase 4Fe-4S domain family. In terms of assembly, alpha(8)-beta(8). The alpha component is a flavoprotein, the beta component is a hemoprotein. It depends on siroheme as a cofactor. [4Fe-4S] cluster is required as a cofactor.

It carries out the reaction hydrogen sulfide + 3 NADP(+) + 3 H2O = sulfite + 3 NADPH + 4 H(+). Its pathway is sulfur metabolism; hydrogen sulfide biosynthesis; hydrogen sulfide from sulfite (NADPH route): step 1/1. Component of the sulfite reductase complex that catalyzes the 6-electron reduction of sulfite to sulfide. This is one of several activities required for the biosynthesis of L-cysteine from sulfate. The protein is Sulfite reductase [NADPH] hemoprotein beta-component of Vibrio vulnificus (strain CMCP6).